The primary structure comprises 302 residues: Glycine--tRNA ligase alpha subunit (302 aa).

It belongs to the class-II aminoacyl-tRNA synthetase family. Tetramer of two alpha and two beta subunits.

The protein resides in the cytoplasm. The enzyme catalyses tRNA(Gly) + glycine + ATP = glycyl-tRNA(Gly) + AMP + diphosphate. The polypeptide is Glycine--tRNA ligase alpha subunit (Haemophilus influenzae (strain 86-028NP)).